Reading from the N-terminus, the 249-residue chain is 5'-nucleotidase SurE (249 aa).

Residues D9, D10, S40, and N92 each coordinate a divalent metal cation.

This sequence belongs to the SurE nucleotidase family. It depends on a divalent metal cation as a cofactor.

It localises to the cytoplasm. It carries out the reaction a ribonucleoside 5'-phosphate + H2O = a ribonucleoside + phosphate. Functionally, nucleotidase that shows phosphatase activity on nucleoside 5'-monophosphates. The sequence is that of 5'-nucleotidase SurE from Shewanella putrefaciens (strain CN-32 / ATCC BAA-453).